A 248-amino-acid polypeptide reads, in one-letter code: Granzyme-like protein 2 (248 aa).

The N-terminal stretch at Met-1 to Gly-18 is a signal peptide. Positions Gly-19 to Glu-20 are cleaved as a propeptide — activation peptide. The Peptidase S1 domain occupies Ile-21–Lys-243. Cysteines 50 and 66 form a disulfide. Catalysis depends on charge relay system residues His-65 and Asp-108. 2 disulfides stabilise this stretch: Cys-142-Cys-207 and Cys-172-Cys-186. N-linked (GlcNAc...) asparagine glycans are attached at residues Asn-152 and Asn-180. Ser-201 serves as the catalytic Charge relay system.

This sequence belongs to the peptidase S1 family. Granzyme subfamily. Duodenum, lung and spleen.

In terms of biological role, this enzyme is necessary for target cell lysis in cell-mediated immune responses. This chain is Granzyme-like protein 2, found in Rattus norvegicus (Rat).